The chain runs to 100 residues: MITLSHYLVVAALMFVLGLIGIMKRNNLIMLFFSSEILLNAANVALAAISKFYNDITGQIFALFIVAVAASEVAVGLGLLILWYKKTGSIELSSMNNMRD.

A run of 3 helical transmembrane segments spans residues 2–22 (ITLSHYLVVAALMFVLGLIGI), 29–49 (IMLFFSSEILLNAANVALAAI), and 63–83 (LFIVAVAASEVAVGLGLLILW).

This sequence belongs to the complex I subunit 4L family. As to quaternary structure, NDH-1 is composed of 14 different subunits. Subunits NuoA, H, J, K, L, M, N constitute the membrane sector of the complex.

The protein localises to the cell inner membrane. The enzyme catalyses a quinone + NADH + 5 H(+)(in) = a quinol + NAD(+) + 4 H(+)(out). In terms of biological role, NDH-1 shuttles electrons from NADH, via FMN and iron-sulfur (Fe-S) centers, to quinones in the respiratory chain. The immediate electron acceptor for the enzyme in this species is believed to be ubiquinone. Couples the redox reaction to proton translocation (for every two electrons transferred, four hydrogen ions are translocated across the cytoplasmic membrane), and thus conserves the redox energy in a proton gradient. The sequence is that of NADH-quinone oxidoreductase subunit K from Campylobacter curvus (strain 525.92).